The sequence spans 805 residues: Polyribonucleotide nucleotidyltransferase (805 aa).

Mg(2+)-binding residues include D491 and D497. The 60-residue stretch at 558–617 (PRMESMIIDKNKIKNVIGTGGKNVREICEKTGVKIEISQDGTVMIYAVSRDAVEEAKNMI) folds into the KH domain. In terms of domain architecture, S1 motif spans 627 to 694 (GKVFSGVISE…DKDHVQLSMR (68 aa)). Residues 702–805 (DLLEHESYSS…GGGNKKPRFF (104 aa)) are disordered. The segment covering 709-721 (YSSSKKNGPQSGD) has biased composition (polar residues).

The protein belongs to the polyribonucleotide nucleotidyltransferase family. Requires Mg(2+) as cofactor.

It is found in the cytoplasm. The catalysed reaction is RNA(n+1) + phosphate = RNA(n) + a ribonucleoside 5'-diphosphate. In terms of biological role, involved in mRNA degradation. Catalyzes the phosphorolysis of single-stranded polyribonucleotides processively in the 3'- to 5'-direction. This is Polyribonucleotide nucleotidyltransferase from Anaplasma marginale (strain St. Maries).